Reading from the N-terminus, the 316-residue chain is Ribosomal protein L11 methyltransferase (316 aa).

S-adenosyl-L-methionine contacts are provided by threonine 157, glycine 178, aspartate 200, and asparagine 243.

Belongs to the methyltransferase superfamily. PrmA family.

The protein resides in the cytoplasm. It carries out the reaction L-lysyl-[protein] + 3 S-adenosyl-L-methionine = N(6),N(6),N(6)-trimethyl-L-lysyl-[protein] + 3 S-adenosyl-L-homocysteine + 3 H(+). Its function is as follows. Methylates ribosomal protein L11. The chain is Ribosomal protein L11 methyltransferase from Streptococcus pneumoniae (strain Hungary19A-6).